We begin with the raw amino-acid sequence, 1476 residues long: Membrane-associated guanylate kinase, WW and PDZ domain-containing protein 3 (1476 aa).

Positions Cys18–Gly108 constitute a PDZ 1 domain. The interval Cys18–Gly108 is interaction with ADRB1 and TGFA. One can recognise a Guanylate kinase-like domain in the interval Arg116–Met290. Phe123–His130 provides a ligand contact to ATP. A disordered region spans residues Thr184 to Ser266. The span at Pro193–Pro204 shows a compositional bias: pro residues. A Phosphoserine modification is found at Ser236. Over residues Leu238–Lys247 the composition is skewed to acidic residues. 2 WW domains span residues Glu296–Leu329 and Gly342–Glu375. Residues Arg413–Arg495 form the PDZ 2 domain. Residues Arg413 to Arg495 are interaction with PTEN. The segment at Leu551–Ser575 is disordered. Positions Pro559–Ser575 are enriched in polar residues. The PDZ 3 domain occupies Thr581–Arg657. Ser598 carries the phosphoserine modification. The interval Thr664–Met691 is disordered. Ser702 is subject to Phosphoserine. In terms of domain architecture, PDZ 4 spans Asp729 to Arg811. The interaction with ADGRB1 stretch occupies residues Asp729–Arg811. The tract at residues Lys818 to Arg844 is disordered. A phosphoserine mark is found at Ser833 and Ser916. Residues Asp852 to Glu939 enclose the PDZ 5 domain. The interval Asp852–Glu939 is interaction with LPAR2 and GRIN2B. The tract at residues Glu939–Gln966 is disordered. A compositionally biased stretch (polar residues) spans Ser946–Ala956. Residues Pro1022 to Thr1104 enclose the PDZ 6 domain. Disordered regions lie at residues Asp1109 to Asp1151 and Thr1168 to Leu1476. Residues Asp1114 to Val1123 are compositionally biased toward polar residues. Composition is skewed to basic and acidic residues over residues Ser1193 to Gly1211 and Arg1230 to Gly1265. Residues Ser1285–Gly1304 are compositionally biased toward polar residues. 2 stretches are compositionally biased toward basic and acidic residues: residues His1317 to Lys1340 and Lys1350 to Glu1361. Residue Ser1321 is modified to Phosphoserine. A compositionally biased stretch (polar residues) spans Ser1363 to Ala1373. Residues Ala1419–Ala1437 show a composition bias toward basic and acidic residues.

The protein belongs to the MAGUK family. In terms of assembly, interacts with ADRB1, ADGRB1, LPAR2/EDG4, GRIN2B, PTEN, and PTPRB. Interacts with unidentified tyrosine phosphorylated proteins. Interacts with FZD4, FZD7, TGFA and VANGL2. Interacts with DLL1. Interacts with PRRG4 (via cytoplasmic domain). In terms of tissue distribution, widely expressed. Colocalizes with TGFA in neurons in the cortex and dentate gyrus, as well as in ependymal cells and some astrocytes (at protein level). Present in lens epithelium.

The protein resides in the cell membrane. Its subcellular location is the cell junction. It localises to the tight junction. It is found in the nucleus. Functionally, acts as a scaffolding protein at cell-cell junctions, thereby regulating various cellular and signaling processes. Cooperates with PTEN to modulate the kinase activity of AKT1. Its interaction with PTPRB and tyrosine phosphorylated proteins suggests that it may link receptor tyrosine phosphatase with its substrates at the plasma membrane. In polarized epithelial cells, involved in efficient trafficking of TGFA to the cell surface. Regulates the ability of LPAR2 to activate ERK and RhoA pathways. Regulates the JNK signaling cascade via its interaction with FZD4 and VANGL2. This chain is Membrane-associated guanylate kinase, WW and PDZ domain-containing protein 3 (Magi3), found in Mus musculus (Mouse).